The following is a 652-amino-acid chain: 2',3'-cyclic-nucleotide 2'-phosphodiesterase/3'-nucleotidase (652 aa).

Residues 1–24 (MFKRPLTLSLLASLIALTTSTAQA) form the signal peptide. The a divalent metal cation site is built by D36, H38, D81, N121, H230, H262, and H264. Residues Y445 and 549-555 (YRAYSGK) contribute to the substrate site.

The protein belongs to the 5'-nucleotidase family. It depends on a divalent metal cation as a cofactor.

The protein resides in the periplasm. The enzyme catalyses a nucleoside 2',3'-cyclic phosphate + H2O = a nucleoside 3'-phosphate + H(+). It catalyses the reaction a ribonucleoside 3'-phosphate + H2O = a ribonucleoside + phosphate. In terms of biological role, this bifunctional enzyme catalyzes two consecutive reactions during ribonucleic acid degradation. Converts a 2',3'-cyclic nucleotide to a 3'-nucleotide and then the 3'-nucleotide to the corresponding nucleoside and phosphate. The polypeptide is 2',3'-cyclic-nucleotide 2'-phosphodiesterase/3'-nucleotidase (cpdB) (Yersinia enterocolitica).